The sequence spans 290 residues: Xyloglucan endotransglucosylase/hydrolase protein 9 (290 aa).

An N-terminal signal peptide occupies residues methionine 1 to glycine 26. The region spanning alanine 27–tyrosine 215 is the GH16 domain. N-linked (GlcNAc...) asparagine glycosylation occurs at asparagine 55. Glutamate 101 acts as the Nucleophile in catalysis. Glutamate 105 (proton donor) is an active-site residue. Glutamate 105 is a xyloglucan binding site. N-linked (GlcNAc...) asparagine glycosylation occurs at asparagine 109. Xyloglucan is bound by residues glutamine 118–asparagine 120, asparagine 128–glutamate 130, aspartate 194–tryptophan 195, and glycine 199. Intrachain disulfides connect cysteine 223–cysteine 234 and cysteine 271–cysteine 284. Position 276 (arginine 276) interacts with xyloglucan.

It belongs to the glycosyl hydrolase 16 family. XTH group 1 subfamily. Contains at least one intrachain disulfide bond essential for its enzymatic activity. As to expression, highly expressed in shoot apices. In the vegetative and reproductive phases, it accumulates in the shoot apex region, where cell division is most active. In the reproductive phase, it is also expressed in flower buds, flower stalks and internodes bearing flowers.

It is found in the secreted. The protein localises to the cell wall. The protein resides in the extracellular space. Its subcellular location is the apoplast. The enzyme catalyses breaks a beta-(1-&gt;4) bond in the backbone of a xyloglucan and transfers the xyloglucanyl segment on to O-4 of the non-reducing terminal glucose residue of an acceptor, which can be a xyloglucan or an oligosaccharide of xyloglucan.. Its function is as follows. Catalyzes xyloglucan endohydrolysis (XEH) and/or endotransglycosylation (XET). Cleaves and religates xyloglucan polymers, an essential constituent of the primary cell wall, and thereby participates in cell wall construction of growing tissues. Involved in internodal cell elongation. The chain is Xyloglucan endotransglucosylase/hydrolase protein 9 (XTH9) from Arabidopsis thaliana (Mouse-ear cress).